A 402-amino-acid polypeptide reads, in one-letter code: Bone morphogenetic protein 8A (402 aa).

A signal peptide spans 1-19; sequence MAARPGPLWLLGLTLCALG. The propeptide occupies 20–263; the sequence is GGGPGLRPPP…ASPSPIRTPR (244 aa). N-linked (GlcNAc...) asparagine glycosylation is found at N158 and N343. 3 cysteine pairs are disulfide-bonded: C301/C367, C330/C399, and C334/C401.

This sequence belongs to the TGF-beta family. In terms of assembly, homodimer; disulfide-linked.

The protein localises to the secreted. In terms of biological role, induces cartilage and bone formation. May be the osteoinductive factor responsible for the phenomenon of epithelial osteogenesis. Plays a role in calcium regulation and bone homeostasis. Signaling protein involved in regulation of thermogenesis and energy balance. Proposed to increase the peripheral response of brown adipose tissue (BAT) to adrenergic stimulation while acting centrally in the hypothalamus to increase sympathetic output to BAT. Growth factor of the TGF-beta superfamily that plays important role in various biological processes, including spermatogenesis, osteogenesis, steroidogenesis as well as regulation of energy balance. Initiates the canonical BMP signaling cascade by associating with type I receptor BMPR1A and type II receptor BMPR2. Once all three components are bound together in a complex at the cell surface, BMPR2 phosphorylates and activates BMPR1A. In turn, BMPR1A propagates signal by phosphorylating SMAD1/5/8 that travel to the nucleus and act as activators and repressors of transcription of target genes. In addition, activates the SMAD2/3 pathway. This Homo sapiens (Human) protein is Bone morphogenetic protein 8A (BMP8A).